The chain runs to 2606 residues: Large tegument protein deneddylase (2606 aa).

The tract at residues Met1–Leu235 is deubiquitination activity. Positions Leu14–Ala225 constitute a Peptidase C76 domain. Residues Cys34, Asp163, and His165 contribute to the active site. Disordered stretches follow at residues Ile318–Ala349, Asp390–Gln411, Lys1020–Glu1135, Pro2253–Leu2316, and Pro2434–Tyr2458. Polar residues predominate over residues Thr1038–Gln1050. Over residues Gln1051–Leu1061 the composition is skewed to basic and acidic residues. Over residues Lys1085 to Lys1097 the composition is skewed to polar residues. Low complexity predominate over residues Glu1105–Glu1132. Positions Pro2304–Leu2316 are enriched in pro residues.

The protein belongs to the herpesviridae large tegument protein family. As to quaternary structure, interacts with host CUL1 and CUL4A; these interactions inhibit the E3 ligase activity of cullins. Interacts with inner tegument protein. Interacts with capsid vertex specific component CVC2. Interacts with the major capsid protein/MCP.

The protein resides in the virion tegument. It localises to the host cytoplasm. The protein localises to the host nucleus. The catalysed reaction is Thiol-dependent hydrolysis of ester, thioester, amide, peptide and isopeptide bonds formed by the C-terminal Gly of ubiquitin (a 76-residue protein attached to proteins as an intracellular targeting signal).. Its function is as follows. Large tegument protein that plays multiple roles in the viral cycle. During viral entry, remains associated with the capsid while most of the tegument is detached and participates in the capsid transport toward the host nucleus. Plays a role in the routing of the capsid at the nuclear pore complex and subsequent uncoating. Within the host nucleus, acts as a deneddylase and promotes the degradation of nuclear CRLs (cullin-RING ubiquitin ligases) and thereby stabilizes nuclear CRL substrates, while cytoplasmic CRLs remain unaffected. These modifications prevent host cell cycle S-phase progression and create a favorable environment allowing efficient viral genome replication. Participates later in the secondary envelopment of capsids. Indeed, plays a linker role for the association of the outer viral tegument to the capsids together with the inner tegument protein. This is Large tegument protein deneddylase (64) from Connochaetes taurinus (Blue wildebeest).